Reading from the N-terminus, the 293-residue chain is Acetyl-coenzyme A carboxylase carboxyl transferase subunit beta (293 aa).

The CoA carboxyltransferase N-terminal domain occupies 29–293; that stretch reads LWVKCSECSQ…GVKELAEANT (265 aa). 4 residues coordinate Zn(2+): cysteine 33, cysteine 36, cysteine 52, and cysteine 55. The C4-type zinc finger occupies 33 to 55; it reads CSECSQVAYRKDLISNFNVCSNC.

This sequence belongs to the AccD/PCCB family. Acetyl-CoA carboxylase is a heterohexamer composed of biotin carboxyl carrier protein (AccB), biotin carboxylase (AccC) and two subunits each of ACCase subunit alpha (AccA) and ACCase subunit beta (AccD). Requires Zn(2+) as cofactor.

The protein localises to the cytoplasm. It carries out the reaction N(6)-carboxybiotinyl-L-lysyl-[protein] + acetyl-CoA = N(6)-biotinyl-L-lysyl-[protein] + malonyl-CoA. It functions in the pathway lipid metabolism; malonyl-CoA biosynthesis; malonyl-CoA from acetyl-CoA: step 1/1. Functionally, component of the acetyl coenzyme A carboxylase (ACC) complex. Biotin carboxylase (BC) catalyzes the carboxylation of biotin on its carrier protein (BCCP) and then the CO(2) group is transferred by the transcarboxylase to acetyl-CoA to form malonyl-CoA. The sequence is that of Acetyl-coenzyme A carboxylase carboxyl transferase subunit beta from Prochlorococcus marinus (strain MIT 9301).